An 80-amino-acid polypeptide reads, in one-letter code: Cytochrome c oxidase subunit 7B, mitochondrial (80 aa).

The transit peptide at 1 to 24 directs the protein to the mitochondrion; it reads MLPLAKNALSRLQVRSIQQVVARQ. Residues 25–32 are Mitochondrial matrix-facing; sequence SHQKKTPT. The chain crosses the membrane as a helical span at residues 33–59; sequence FHDKYGNAVLAGGSIFCISAWTYTATQ. At 60–80 the chain is on the mitochondrial intermembrane side; the sequence is IGIEWNLSPVGRVTPKEWRDQ.

Belongs to the cytochrome c oxidase VIIb family. As to quaternary structure, component of the cytochrome c oxidase (complex IV, CIV), a multisubunit enzyme composed of 14 subunits. The complex is composed of a catalytic core of 3 subunits MT-CO1, MT-CO2 and MT-CO3, encoded in the mitochondrial DNA, and 11 supernumerary subunits COX4I, COX5A, COX5B, COX6A, COX6B, COX6C, COX7A, COX7B, COX7C, COX8 and NDUFA4, which are encoded in the nuclear genome. The complex exists as a monomer or a dimer and forms supercomplexes (SCs) in the inner mitochondrial membrane with NADH-ubiquinone oxidoreductase (complex I, CI) and ubiquinol-cytochrome c oxidoreductase (cytochrome b-c1 complex, complex III, CIII), resulting in different assemblies (supercomplex SCI(1)III(2)IV(1) and megacomplex MCI(2)III(2)IV(2)).

The protein resides in the mitochondrion inner membrane. It participates in energy metabolism; oxidative phosphorylation. Functionally, component of the cytochrome c oxidase, the last enzyme in the mitochondrial electron transport chain which drives oxidative phosphorylation. The respiratory chain contains 3 multisubunit complexes succinate dehydrogenase (complex II, CII), ubiquinol-cytochrome c oxidoreductase (cytochrome b-c1 complex, complex III, CIII) and cytochrome c oxidase (complex IV, CIV), that cooperate to transfer electrons derived from NADH and succinate to molecular oxygen, creating an electrochemical gradient over the inner membrane that drives transmembrane transport and the ATP synthase. Cytochrome c oxidase is the component of the respiratory chain that catalyzes the reduction of oxygen to water. Electrons originating from reduced cytochrome c in the intermembrane space (IMS) are transferred via the dinuclear copper A center (CU(A)) of subunit 2 and heme A of subunit 1 to the active site in subunit 1, a binuclear center (BNC) formed by heme A3 and copper B (CU(B)). The BNC reduces molecular oxygen to 2 water molecules using 4 electrons from cytochrome c in the IMS and 4 protons from the mitochondrial matrix. Plays a role in proper central nervous system (CNS) development in vertebrates. In Rattus norvegicus (Rat), this protein is Cytochrome c oxidase subunit 7B, mitochondrial (Cox7b).